The chain runs to 631 residues: Phosphomethylpyrimidine synthase (631 aa).

Substrate is bound by residues N239, M268, Y297, H333, 353–355 (SRG), 394–397 (DGLR), and E433. A Zn(2+)-binding site is contributed by H437. Y460 provides a ligand contact to substrate. A Zn(2+)-binding site is contributed by H501. Positions 581, 584, and 589 each coordinate [4Fe-4S] cluster.

The protein belongs to the ThiC family. Homodimer. The cofactor is [4Fe-4S] cluster.

The enzyme catalyses 5-amino-1-(5-phospho-beta-D-ribosyl)imidazole + S-adenosyl-L-methionine = 4-amino-2-methyl-5-(phosphooxymethyl)pyrimidine + CO + 5'-deoxyadenosine + formate + L-methionine + 3 H(+). It functions in the pathway cofactor biosynthesis; thiamine diphosphate biosynthesis. Catalyzes the synthesis of the hydroxymethylpyrimidine phosphate (HMP-P) moiety of thiamine from aminoimidazole ribotide (AIR) in a radical S-adenosyl-L-methionine (SAM)-dependent reaction. In Shigella boydii serotype 4 (strain Sb227), this protein is Phosphomethylpyrimidine synthase.